Here is a 332-residue protein sequence, read N- to C-terminus: D-glutamate N-acetyltransferase (332 aa).

Belongs to the N-acetyltransferase DgcN family.

It carries out the reaction D-glutamate + acetyl-CoA = N-acetyl-D-glutamate + CoA + H(+). It catalyses the reaction D-aspartate + acetyl-CoA = N-acetyl-D-aspartate + CoA + H(+). The catalysed reaction is D-glutamine + acetyl-CoA = N-acetyl-D-glutamine + CoA + H(+). It functions in the pathway amino-acid degradation. In terms of biological role, N-acetyltransferase involved in a deamination-independent D-glutamate degradation pathway, named the DgcN-DgcA pathway. Catalyzes the transfer of the acetyl moiety from acetyl-CoA to D-glutamate to generate N-acetyl-D-glutamate. Can also acetylate D-aspartate and D-glutamine, with lower efficiency. Has low activity with D-asparagine. Cannot use succinyl-CoA. The chain is D-glutamate N-acetyltransferase from Pseudoalteromonas sp.